The primary structure comprises 433 residues: Probable M18 family aminopeptidase 2 (433 aa).

Zn(2+) contacts are provided by His-84, His-161, and His-409.

Belongs to the peptidase M18 family. Zn(2+) is required as a cofactor.

In Clostridium acetobutylicum (strain ATCC 824 / DSM 792 / JCM 1419 / IAM 19013 / LMG 5710 / NBRC 13948 / NRRL B-527 / VKM B-1787 / 2291 / W), this protein is Probable M18 family aminopeptidase 2 (apeB).